The sequence spans 559 residues: MAAQGFLLIASFLLILLVLAKPLGSGLARLIAAVPLPGVAGVERILWRTLGITDHEMNWRQYLLALLTLNLLGLGILFCLLFWQEWLPLNPQRLPGLSWDLALNTAVSFVTNTNWQAYSGESTLSYFSQMAGLTVQNFLSAATGIAVVFALIRAFTRQNVHTLGNAWQDLVRITLWILFPVALIIALFFIQQGVPQNLSAYQPITTLEGAKQLLPMGPVASQEAIKMLGTNGGGFFNANSSHPFENPTALTNLAQMLAIFLIPAALCFAFGEAAGDRRQGRALLWAMSFIFVVCVAVVMWAEVQGNPHLLAAGADSSVNMEGKETRFGVLASSLFAVVTTAASCGAVNAMHDSFTALGGMVPMWLMQIGEVVFGGVGSGLYGMLLFVLLAVFIAGLMIGRTPEYLGKKIDVREMKMTALAILVTPMLVLLGSALAMMTDAGRSAMLNPGPHGFSEVLYAVSSAANNNGSAFAGLSANSPFWNCLLAFCMFVGRFGVIIPVMAIAGSLVSKKVQPASQGTLATHGALFIGLLIGTVLLVGALTFIPALALGPVAEHFSLP.

The next 13 membrane-spanning stretches (helical) occupy residues 5 to 25 (GFLL…PLGS), 27 to 47 (LARL…RILW), 63 to 83 (LLAL…LLFW), 132 to 152 (GLTV…FALI), 170 to 190 (LVRI…LFFI), 253 to 273 (LAQM…FGEA), 283 to 303 (LLWA…WAEV), 327 to 347 (FGVL…CGAV), 356 to 376 (ALGG…FGGV), 379 to 399 (GLYG…LMIG), 416 to 436 (MTAL…ALAM), 484 to 504 (LLAF…MAIA), and 524 to 544 (GALF…LTFI).

This sequence belongs to the KdpA family. The system is composed of three essential subunits: KdpA, KdpB and KdpC.

The protein resides in the cell inner membrane. In terms of biological role, part of the high-affinity ATP-driven potassium transport (or Kdp) system, which catalyzes the hydrolysis of ATP coupled with the electrogenic transport of potassium into the cytoplasm. This subunit binds the periplasmic potassium ions and delivers the ions to the membrane domain of KdpB through an intramembrane tunnel. In Salmonella enteritidis PT4 (strain P125109), this protein is Potassium-transporting ATPase potassium-binding subunit.